The primary structure comprises 750 residues: Neprilysin (750 aa).

Residues 1-14 (MGKSESQMDITDIN) are compositionally biased toward polar residues. A disordered region spans residues 1–20 (MGKSESQMDITDINTPKPKK). Gly2 carries the N-myristoyl glycine lipid modification. The Cytoplasmic segment spans residues 2–28 (GKSESQMDITDINTPKPKKKQRWTPLE). Phosphoserine is present on residues Ser4 and Ser6. Residues 16 to 23 (PKPKKKQR) carry the Stop-transfer sequence motif. The chain crosses the membrane as a helical; Signal-anchor for type II membrane protein span at residues 29–51 (ISLSVLVLLLTIIAVTMIALYAT). The Extracellular portion of the chain corresponds to 52 to 750 (YDDGICKSSD…MNPEKKCRVW (699 aa)). The Peptidase M13 domain occupies 56–750 (ICKSSDCIKS…MNPEKKCRVW (695 aa)). Intrachain disulfides connect Cys57/Cys62, Cys80/Cys735, Cys88/Cys695, Cys143/Cys411, Cys234/Cys242, and Cys621/Cys747. Residue Arg103 participates in a peptide binding. Residue Asn145 is glycosylated (N-linked (GlcNAc...) asparagine). N-linked (GlcNAc...) asparagine glycans are attached at residues Asn285 and Asn325. Residue His584 coordinates Zn(2+). Glu585 is a catalytic residue. A Zn(2+)-binding site is contributed by His588. Asn628 is a glycosylation site (N-linked (GlcNAc...) asparagine). Glu647 contacts Zn(2+). Asp651 functions as the Proton donor in the catalytic mechanism.

Belongs to the peptidase M13 family. It depends on Zn(2+) as a cofactor. Post-translationally, myristoylation is a determinant of membrane targeting. Glycosylation at Asn-628 is necessary both for surface expression and neutral endopeptidase activity.

It localises to the cell membrane. It carries out the reaction Preferential cleavage of polypeptides between hydrophobic residues, particularly with Phe or Tyr at P1'.. The enzyme catalyses substance P + H2O = substance P(1-9) + L-Leu-L-Met-NH2. The catalysed reaction is substance P + H2O = substance P(1-7) + L-Phe-Gly-L-Leu-L-Met-NH2. It catalyses the reaction neurotensin + H2O = neurotensin(1-11) + L-isoleucyl-L-leucine. It carries out the reaction neurotensin + H2O = neurotensin(1-10) + L-tyrosyl-L-isoleucyl-L-leucine. Inhibited in a dose dependent manner by opiorphin. Activated by K49-P1-20, a twenty-residue synthetic peptide shortened from the snake B.asper myotoxin II. Thermolysin-like specificity, but is almost confined on acting on polypeptides of up to 30 amino acids. Biologically important in the destruction of opioid peptides such as Met- and Leu-enkephalins by cleavage of a Gly-Phe bond. Catalyzes cleavage of bradykinin, substance P and neurotensin peptides. Able to cleave angiotensin-1, angiotensin-2 and angiotensin 1-9. Involved in the degradation of atrial natriuretic factor (ANF) and brain natriuretic factor (BNP(1-32)). Displays UV-inducible elastase activity toward skin preelastic and elastic fibers. The sequence is that of Neprilysin from Homo sapiens (Human).